Reading from the N-terminus, the 225-residue chain is Small ribosomal subunit protein L51-b (225 aa).

The transit peptide at 1–84 (MKFPDLLRCS…QCAFISSDRF (84 aa)) directs the protein to the mitochondrion.

Belongs to the bacterial ribosomal protein bS1 family. In terms of assembly, component of the mitochondrial small ribosomal subunit (mt-SSU). Mature yeast 74S mitochondrial ribosomes consist of a small (37S) and a large (54S) subunit. The 37S small subunit contains a 15S ribosomal RNA (15S mt-rRNA) and at least 32 different proteins. The 54S large subunit contains a 21S rRNA (21S mt-rRNA) and at least 45 different proteins. This subunit is mutually exclusive with mrp51/small ribosomal subunit protein bS1m.

Its subcellular location is the mitochondrion. Its function is as follows. Component of the mitochondrial ribosome (mitoribosome), a dedicated translation machinery responsible for the synthesis of mitochondrial genome-encoded proteins, including at least some of the essential transmembrane subunits of the mitochondrial respiratory chain. The mitoribosomes are attached to the mitochondrial inner membrane and translation products are cotranslationally integrated into the membrane. Functionally interacts with the 5'-UTR of mitochondrial mRNAs. Specifically plays a role in the translation of cob1/cytochrome b and cox3. Has a role in meiosis. The sequence is that of Small ribosomal subunit protein L51-b from Schizosaccharomyces pombe (strain 972 / ATCC 24843) (Fission yeast).